The sequence spans 110 residues: V-type proton ATPase subunit G 1 (110 aa).

The protein belongs to the V-ATPase G subunit family. As to quaternary structure, V-ATPase is a heteromultimeric enzyme composed of a peripheral catalytic V1 complex (components A to H) attached to an integral membrane V0 proton pore complex (components: a, c, c', c'' and d).

Functionally, catalytic subunit of the peripheral V1 complex of vacuolar ATPase (V-ATPase). V-ATPase is responsible for acidifying a variety of intracellular compartments in eukaryotic cells. The polypeptide is V-type proton ATPase subunit G 1 (VATG1) (Nicotiana tabacum (Common tobacco)).